We begin with the raw amino-acid sequence, 42 residues long: Photosystem II reaction center protein J (42 aa).

A helical membrane pass occupies residues 10 to 30 (IPLWLVLTIIGLAAIALLALF).

This sequence belongs to the PsbJ family. As to quaternary structure, PSII is composed of 1 copy each of membrane proteins PsbA, PsbB, PsbC, PsbD, PsbE, PsbF, PsbH, PsbI, PsbJ, PsbK, PsbL, PsbM, PsbT, PsbY, PsbZ, Psb30/Ycf12, at least 3 peripheral proteins of the oxygen-evolving complex and a large number of cofactors. It forms dimeric complexes.

The protein resides in the plastid. It is found in the chloroplast thylakoid membrane. Functionally, this protein is a component of the reaction center of photosystem II. One of the components of the core complex of photosystem II (PSII). PSII is a light-driven water:plastoquinone oxidoreductase that uses light energy to abstract electrons from H(2)O, generating O(2) and a proton gradient subsequently used for ATP formation. It consists of a core antenna complex that captures photons, and an electron transfer chain that converts photonic excitation into a charge separation. In Euglena gracilis, this protein is Photosystem II reaction center protein J.